Here is a 138-residue protein sequence, read N- to C-terminus: Large ribosomal subunit protein uL16 (138 aa).

Residues 1–13 (MLQPARRKYRKEQ) show a composition bias toward basic residues. Residues 1–22 (MLQPARRKYRKEQKGRNTGVAT) form a disordered region.

It belongs to the universal ribosomal protein uL16 family. In terms of assembly, part of the 50S ribosomal subunit.

Binds 23S rRNA and is also seen to make contacts with the A and possibly P site tRNAs. In Polaromonas sp. (strain JS666 / ATCC BAA-500), this protein is Large ribosomal subunit protein uL16.